We begin with the raw amino-acid sequence, 472 residues long: ATP synthase subunit beta (472 aa).

149–156 (GGAGVGKT) contributes to the ATP binding site.

Belongs to the ATPase alpha/beta chains family. As to quaternary structure, F-type ATPases have 2 components, CF(1) - the catalytic core - and CF(0) - the membrane proton channel. CF(1) has five subunits: alpha(3), beta(3), gamma(1), delta(1), epsilon(1). CF(0) has three main subunits: a(1), b(2) and c(9-12). The alpha and beta chains form an alternating ring which encloses part of the gamma chain. CF(1) is attached to CF(0) by a central stalk formed by the gamma and epsilon chains, while a peripheral stalk is formed by the delta and b chains.

The protein localises to the cell inner membrane. The catalysed reaction is ATP + H2O + 4 H(+)(in) = ADP + phosphate + 5 H(+)(out). Its function is as follows. Produces ATP from ADP in the presence of a proton gradient across the membrane. The catalytic sites are hosted primarily by the beta subunits. The protein is ATP synthase subunit beta of Pelagibacter ubique (strain HTCC1062).